The primary structure comprises 430 residues: Mitochondrial distribution and morphology protein 10 (430 aa).

Over residues 215 to 234 the composition is skewed to polar residues; that stretch reads SSSAMNPPSGTSASETNGSG. Disordered stretches follow at residues 215-237 and 339-393; these read SSSAMNPPSGTSASETNGSGPSV and LGAN…GPKE.

It belongs to the MDM10 family. In terms of assembly, component of the ER-mitochondria encounter structure (ERMES) or MDM complex, composed of MMM1, MDM10, MDM12 and MDM34. Associates with the mitochondrial outer membrane sorting assembly machinery SAM(core) complex.

The protein resides in the mitochondrion outer membrane. Functionally, component of the ERMES/MDM complex, which serves as a molecular tether to connect the endoplasmic reticulum and mitochondria. Components of this complex are involved in the control of mitochondrial shape and protein biogenesis and may function in phospholipid exchange. MDM10 is involved in the late assembly steps of the general translocase of the mitochondrial outer membrane (TOM complex). Functions in the TOM40-specific route of the assembly of outer membrane beta-barrel proteins, including the association of TOM40 with the receptor TOM22 and small TOM proteins. Can associate with the SAM(core) complex as well as the MDM12-MMM1 complex, both involved in late steps of the major beta-barrel assembly pathway, that is responsible for biogenesis of all outer membrane beta-barrel proteins. May act as a switch that shuttles between both complexes and channels precursor proteins into the TOM40-specific pathway. Plays a role in mitochondrial morphology and in the inheritance of mitochondria. This Chaetomium globosum (strain ATCC 6205 / CBS 148.51 / DSM 1962 / NBRC 6347 / NRRL 1970) (Soil fungus) protein is Mitochondrial distribution and morphology protein 10.